Consider the following 370-residue polypeptide: Serine O-succinyltransferase (370 aa).

One can recognise an AB hydrolase-1 domain in the interval 46–355 (AILIVTGLSP…PQGHDAFLVD (310 aa)). Positions 52–55 (GLSP) are important for substrate specificity. S149 acts as the Nucleophile in catalysis. R218 contributes to the substrate binding site. Catalysis depends on residues D316 and H349. D350 lines the substrate pocket.

Belongs to the AB hydrolase superfamily. MetX family. As to quaternary structure, homodimer.

The protein resides in the cytoplasm. The catalysed reaction is succinyl-CoA + L-serine = O-succinyl-L-serine + CoA. It catalyses the reaction L-homoserine + succinyl-CoA = O-succinyl-L-homoserine + CoA. It participates in amino-acid biosynthesis; L-cysteine biosynthesis; L-cysteine from L-serine: step 1/2. Its function is as follows. Transfers a succinyl group from succinyl-CoA to L-serine, forming succinyl-L-serine. In vitro, also has homoserine succinyl transferase activity. The chain is Serine O-succinyltransferase from Stenotrophomonas maltophilia (Pseudomonas maltophilia).